Reading from the N-terminus, the 169-residue chain is Small ribosomal subunit protein uS13m (169 aa).

The interval 149-169 is disordered; the sequence is KKLQEKKNKEQKKSQKCKTKK. Residues 150–161 show a composition bias toward basic and acidic residues; the sequence is KLQEKKNKEQKK.

It belongs to the universal ribosomal protein uS13 family. Part of the small ribosomal subunit.

The protein localises to the mitochondrion. Functionally, located at the top of the head of the small subunit, it contacts several helices of the small subunit rRNA. In Dictyostelium discoideum (Social amoeba), this protein is Small ribosomal subunit protein uS13m (mrps13).